The following is a 100-amino-acid chain: NADH-quinone oxidoreductase subunit K (100 aa).

A run of 3 helical transmembrane segments spans residues Leu4 to Thr24, Ile29 to Phe49, and Ile60 to Phe80.

Belongs to the complex I subunit 4L family. NDH-1 is composed of 14 different subunits. Subunits NuoA, H, J, K, L, M, N constitute the membrane sector of the complex.

Its subcellular location is the cell inner membrane. The catalysed reaction is a quinone + NADH + 5 H(+)(in) = a quinol + NAD(+) + 4 H(+)(out). In terms of biological role, NDH-1 shuttles electrons from NADH, via FMN and iron-sulfur (Fe-S) centers, to quinones in the respiratory chain. The immediate electron acceptor for the enzyme in this species is believed to be ubiquinone. Couples the redox reaction to proton translocation (for every two electrons transferred, four hydrogen ions are translocated across the cytoplasmic membrane), and thus conserves the redox energy in a proton gradient. The polypeptide is NADH-quinone oxidoreductase subunit K (Trichlorobacter lovleyi (strain ATCC BAA-1151 / DSM 17278 / SZ) (Geobacter lovleyi)).